We begin with the raw amino-acid sequence, 251 residues long: Probable transcriptional regulatory protein Arth_2304 (251 aa).

It belongs to the TACO1 family.

It localises to the cytoplasm. This chain is Probable transcriptional regulatory protein Arth_2304, found in Arthrobacter sp. (strain FB24).